The sequence spans 507 residues: MVTIRADEISNIIRERIEQYNREVKIVNTGTVLQVGDGIARIHGLDEVMAGELVEFEEGTIGIALNLESNNVGVVLMGDGLMIQEGSSVKATGKIAQIPVSEAYLGRVINALAKPIDGWGEISASESRLIESPAPGIISRRSVYEPLQTGLIAIDSMIPIGRGQRELIFGDRQTGKTAVATDTILNQQGQNVICVYVAIGQKASSVAQVVTTFQERGAMEYTIVVAETADSPATLQYLAPYTGAALAEYFMYRERHTLIIYDDLSKQAQAYRQMSLLLRRPPGREAYPGDVFYLHSRLLERAAKSSSQLGEGSMTALPIVETQSGDVSAYIPTNVISITDGQIFLSADLFNAGIRPAINVGISVSRVGSAAQIKAMKQVAGKSKLELAQFAELEAFAQFASDLDKATQNQLARGQRLRELLKQSQSAPLTVAEQISTIYTGTNGYLDSLEIGQVRKFLVELRTYLKTNKPQFQEIISSTKTFTEEAETLLKDAIQDQMERFRLQEQL.

Gly-170 to Thr-177 contacts ATP.

The protein belongs to the ATPase alpha/beta chains family. In terms of assembly, F-type ATPases have 2 components, CF(1) - the catalytic core - and CF(0) - the membrane proton channel. CF(1) has five subunits: alpha(3), beta(3), gamma(1), delta(1), epsilon(1). CF(0) has four main subunits: a, b, b' and c.

The protein resides in the plastid. Its subcellular location is the chloroplast thylakoid membrane. The catalysed reaction is ATP + H2O + 4 H(+)(in) = ADP + phosphate + 5 H(+)(out). Its function is as follows. Produces ATP from ADP in the presence of a proton gradient across the membrane. The alpha chain is a regulatory subunit. The polypeptide is ATP synthase subunit alpha, chloroplastic (Gossypium barbadense (Sea Island cotton)).